The chain runs to 637 residues: DNA mismatch repair protein MutL (637 aa).

Disordered regions lie at residues 352–384 (DDFT…NVLF) and 405–430 (ASVE…AMEQ).

The protein belongs to the DNA mismatch repair MutL/HexB family.

Functionally, this protein is involved in the repair of mismatches in DNA. It is required for dam-dependent methyl-directed DNA mismatch repair. May act as a 'molecular matchmaker', a protein that promotes the formation of a stable complex between two or more DNA-binding proteins in an ATP-dependent manner without itself being part of a final effector complex. The sequence is that of DNA mismatch repair protein MutL from Halalkalibacterium halodurans (strain ATCC BAA-125 / DSM 18197 / FERM 7344 / JCM 9153 / C-125) (Bacillus halodurans).